The following is a 614-amino-acid chain: DNA double-strand break repair protein Mre11 (614 aa).

Asp-12, His-14, Asp-53, and Asn-88 together coordinate Mn(2+). His-89 serves as the catalytic Proton donor. Mn(2+) contacts are provided by His-158, Asp-189, and His-191. 2 disordered regions span residues 393-434 (ASPI…SPDI) and 487-614 (ALKK…GDYL). Over residues 411–425 (PVSSADSVSAVSPES) the composition is skewed to low complexity. Basic and acidic residues-rich tracts occupy residues 487–502 (ALKKSYEAPDKVREAP), 535–558 (VPEKGGERTELEDDAVNKTEKETG), and 568–591 (GSEKEDADRIEKPAHVPDKAEKPV).

This sequence belongs to the MRE11/RAD32 family. As to quaternary structure, homodimer. Forms a heterotetramer composed of two Mre11 subunits and two Rad50 subunits. It depends on Mn(2+) as a cofactor.

Nuclease activity is regulated by Rad50. In terms of biological role, part of the Rad50/Mre11 complex, which is involved in the early steps of DNA double-strand break (DSB) repair. The complex may facilitate opening of the processed DNA ends to aid in the recruitment of HerA and NurA. Mre11 binds to DSB ends and has both double-stranded 3'-5' exonuclease activity and single-stranded endonuclease activity. This chain is DNA double-strand break repair protein Mre11, found in Methanosarcina acetivorans (strain ATCC 35395 / DSM 2834 / JCM 12185 / C2A).